A 96-amino-acid polypeptide reads, in one-letter code: Protein Vpr (96 aa).

The interval 1–42 (MEQAPEDQGPQREPYNEWTLELLEELKREAVRHFPRPWLHGL) is homooligomerization. A phosphoserine; by host mark is found at S79, S94, and S96.

This sequence belongs to the HIV-1 VPR protein family. In terms of assembly, homooligomer, may form homodimer. Interacts with p6-gag region of the Pr55 Gag precursor protein through a (Leu-X-X)4 motif near the C-terminus of the P6gag protein. Interacts with host UNG. May interact with host RAD23A/HHR23A. Interacts with host VPRBP/DCAF1, leading to hijack the CUL4A-RBX1-DDB1-DCAF1/VPRBP complex, mediating ubiquitination of host proteins such as TERT and ZGPAT and arrest of the cell cycle in G2 phase. In terms of processing, phosphorylated on several residues by host. These phosphorylations regulate VPR activity for the nuclear import of the HIV-1 pre-integration complex.

The protein resides in the virion. Its subcellular location is the host nucleus. The protein localises to the host extracellular space. Functionally, during virus replication, may deplete host UNG protein, and incude G2-M cell cycle arrest. Acts by targeting specific host proteins for degradation by the 26S proteasome, through association with the cellular CUL4A-DDB1 E3 ligase complex by direct interaction with host VPRPB/DCAF-1. Cell cycle arrest reportedly occurs within hours of infection and is not blocked by antiviral agents, suggesting that it is initiated by the VPR carried into the virion. Additionally, VPR induces apoptosis in a cell cycle dependent manner suggesting that these two effects are mechanistically linked. Detected in the serum and cerebrospinal fluid of AIDS patient, VPR may also induce cell death to bystander cells. Its function is as follows. During virus entry, plays a role in the transport of the viral pre-integration (PIC) complex to the host nucleus. This function is crucial for viral infection of non-dividing macrophages. May act directly at the nuclear pore complex, by binding nucleoporins phenylalanine-glycine (FG)-repeat regions. The polypeptide is Protein Vpr (Human immunodeficiency virus type 1 group M subtype C (isolate 92BR025) (HIV-1)).